A 348-amino-acid chain; its full sequence is tRNA N6-adenosine threonylcarbamoyltransferase (348 aa).

Fe cation contacts are provided by histidine 116 and histidine 120. Substrate contacts are provided by residues 138-142 (QVSGG), aspartate 171, glycine 184, aspartate 188, and asparagine 277. Aspartate 309 serves as a coordination point for Fe cation.

It belongs to the KAE1 / TsaD family. Requires Fe(2+) as cofactor.

The protein localises to the cytoplasm. The catalysed reaction is L-threonylcarbamoyladenylate + adenosine(37) in tRNA = N(6)-L-threonylcarbamoyladenosine(37) in tRNA + AMP + H(+). Required for the formation of a threonylcarbamoyl group on adenosine at position 37 (t(6)A37) in tRNAs that read codons beginning with adenine. Is involved in the transfer of the threonylcarbamoyl moiety of threonylcarbamoyl-AMP (TC-AMP) to the N6 group of A37, together with TsaE and TsaB. TsaD likely plays a direct catalytic role in this reaction. The sequence is that of tRNA N6-adenosine threonylcarbamoyltransferase from Lactobacillus johnsonii (strain CNCM I-12250 / La1 / NCC 533).